We begin with the raw amino-acid sequence, 533 residues long: GMP synthase [glutamine-hydrolyzing] (533 aa).

The Glutamine amidotransferase type-1 domain maps to Arg-22 to Thr-215. The active-site Nucleophile is Cys-99. Catalysis depends on residues His-189 and Glu-191. One can recognise a GMPS ATP-PPase domain in the interval Trp-216–Arg-408. An ATP-binding site is contributed by Ser-243–Ser-249.

Homodimer.

It catalyses the reaction XMP + L-glutamine + ATP + H2O = GMP + L-glutamate + AMP + diphosphate + 2 H(+). It functions in the pathway purine metabolism; GMP biosynthesis; GMP from XMP (L-Gln route): step 1/1. Its function is as follows. Catalyzes the synthesis of GMP from XMP. This is GMP synthase [glutamine-hydrolyzing] from Gluconobacter oxydans (strain 621H) (Gluconobacter suboxydans).